Consider the following 473-residue polypeptide: Photosystem II CP43 reaction center protein (473 aa).

A propeptide spanning residues 1–14 is cleaved from the precursor; that stretch reads MKILYSLRRFYHVE. An N-acetylthreonine modification is found at threonine 15. Phosphothreonine is present on threonine 15. 5 consecutive transmembrane segments (helical) span residues 69–93, 134–155, 178–200, 255–275, and 291–312; these read LFEV…PHLA, LLGP…KDRN, KALY…RKIT, KPFA…LSYS, and WFNN…ASQA. Position 367 (glutamate 367) interacts with [CaMn4O5] cluster. Residues 447 to 471 form a helical membrane-spanning segment; the sequence is RARAAAAGFEKGIDRDLEPVLYMTP.

This sequence belongs to the PsbB/PsbC family. PsbC subfamily. PSII is composed of 1 copy each of membrane proteins PsbA, PsbB, PsbC, PsbD, PsbE, PsbF, PsbH, PsbI, PsbJ, PsbK, PsbL, PsbM, PsbT, PsbX, PsbY, PsbZ, Psb30/Ycf12, at least 3 peripheral proteins of the oxygen-evolving complex and a large number of cofactors. It forms dimeric complexes. Binds multiple chlorophylls and provides some of the ligands for the Ca-4Mn-5O cluster of the oxygen-evolving complex. It may also provide a ligand for a Cl- that is required for oxygen evolution. PSII binds additional chlorophylls, carotenoids and specific lipids. is required as a cofactor.

The protein resides in the plastid. Its subcellular location is the chloroplast thylakoid membrane. Its function is as follows. One of the components of the core complex of photosystem II (PSII). It binds chlorophyll and helps catalyze the primary light-induced photochemical processes of PSII. PSII is a light-driven water:plastoquinone oxidoreductase, using light energy to abstract electrons from H(2)O, generating O(2) and a proton gradient subsequently used for ATP formation. The sequence is that of Photosystem II CP43 reaction center protein from Sorghum bicolor (Sorghum).